A 473-amino-acid polypeptide reads, in one-letter code: Ribulose bisphosphate carboxylase large chain (473 aa).

The substrate site is built by asparagine 116 and threonine 166. Lysine 168 acts as the Proton acceptor in catalysis. Substrate is bound at residue lysine 170. Mg(2+)-binding residues include lysine 194, aspartate 196, and glutamate 197. Lysine 194 is subject to N6-carboxylysine. Histidine 287 functions as the Proton acceptor in the catalytic mechanism. Substrate-binding residues include arginine 288, histidine 320, and serine 372.

It belongs to the RuBisCO large chain family. Type I subfamily. Heterohexadecamer of 8 large chains and 8 small chains. Mg(2+) serves as cofactor.

It carries out the reaction 2 (2R)-3-phosphoglycerate + 2 H(+) = D-ribulose 1,5-bisphosphate + CO2 + H2O. The catalysed reaction is D-ribulose 1,5-bisphosphate + O2 = 2-phosphoglycolate + (2R)-3-phosphoglycerate + 2 H(+). RuBisCO catalyzes two reactions: the carboxylation of D-ribulose 1,5-bisphosphate, the primary event in carbon dioxide fixation, as well as the oxidative fragmentation of the pentose substrate. Both reactions occur simultaneously and in competition at the same active site. The polypeptide is Ribulose bisphosphate carboxylase large chain (Cupriavidus metallidurans (strain ATCC 43123 / DSM 2839 / NBRC 102507 / CH34) (Ralstonia metallidurans)).